The following is a 592-amino-acid chain: Ferric-chelate reductase 1 (592 aa).

Residues 2 to 22 (AVSGFTLGTCILLLHISYVAN) traverse the membrane as a helical segment. A Reelin domain is found at 13-179 (LLLHISYVAN…FTTPKATVVP (167 aa)). Residues Asn138, Asn308, and Asn321 are each glycosylated (N-linked (GlcNAc...) asparagine). A DOMON domain is found at 216–331 (EASCVFLSFT…TSYYIFLADG (116 aa)). Residues 335 to 534 (DGRIYKHSQQ…VGTEVVLEVH (200 aa)) form the Cytochrome b561 domain. Residues 372–392 (VHGALMFVAWMTTVSIGVLVA) form a helical membrane-spanning segment. Heme b-binding residues include His373 and His414. Helical transmembrane passes span 415-435 (RMLM…PFIY) and 446-466 (HPYL…LAVF). Heme b-binding residues include His446 and His482. Transmembrane regions (helical) follow at residues 491–511 (IIAV…LPDS), 515–535 (YAMT…EVHA), and 569–589 (AVLA…LSAI).

The protein belongs to the FRRS1 family. Requires heme b as cofactor.

It is found in the membrane. In terms of biological role, ferric-chelate reductases reduce Fe(3+) to Fe(2+) before its transport from the endosome to the cytoplasm. This is Ferric-chelate reductase 1 (FRRS1) from Homo sapiens (Human).